Consider the following 282-residue polypeptide: 3-methyl-2-oxobutanoate hydroxymethyltransferase (282 aa).

Positions 63 and 102 each coordinate Mg(2+). 3-methyl-2-oxobutanoate contacts are provided by residues 63–64, aspartate 102, and lysine 132; that span reads DS. Glutamate 134 provides a ligand contact to Mg(2+). Glutamate 200 serves as the catalytic Proton acceptor.

The protein belongs to the PanB family. Homodecamer; pentamer of dimers. Mg(2+) serves as cofactor.

The protein resides in the cytoplasm. The enzyme catalyses 3-methyl-2-oxobutanoate + (6R)-5,10-methylene-5,6,7,8-tetrahydrofolate + H2O = 2-dehydropantoate + (6S)-5,6,7,8-tetrahydrofolate. It participates in cofactor biosynthesis; (R)-pantothenate biosynthesis; (R)-pantoate from 3-methyl-2-oxobutanoate: step 1/2. In terms of biological role, catalyzes the reversible reaction in which hydroxymethyl group from 5,10-methylenetetrahydrofolate is transferred onto alpha-ketoisovalerate to form ketopantoate. This is 3-methyl-2-oxobutanoate hydroxymethyltransferase from Mycobacterium sp. (strain JLS).